Here is a 372-residue protein sequence, read N- to C-terminus: DNA replication and repair protein RecF (372 aa).

ATP is bound at residue 30 to 37; that stretch reads GENAQGKT.

This sequence belongs to the RecF family.

The protein resides in the cytoplasm. Its function is as follows. The RecF protein is involved in DNA metabolism; it is required for DNA replication and normal SOS inducibility. RecF binds preferentially to single-stranded, linear DNA. It also seems to bind ATP. The sequence is that of DNA replication and repair protein RecF from Exiguobacterium sp. (strain ATCC BAA-1283 / AT1b).